Reading from the N-terminus, the 550-residue chain is Mitochondrial distribution and morphology protein 34 (550 aa).

The SMP-LTD domain maps to 1 to 208 (MAFNFNWSPL…CPEQMSKEDH (208 aa)). Disordered stretches follow at residues 294–313 (VDKP…LVKS), 358–505 (RNAK…ILEQ), and 519–550 (VYDE…TAAS). A compositionally biased stretch (low complexity) spans 300–310 (SSTTPLTTPSL). Over residues 364 to 376 (ANRKKKTRVVNLR) the composition is skewed to basic residues. 2 stretches are compositionally biased toward polar residues: residues 391-407 (MSDS…TMSD) and 458-467 (AEISQPQVAR). The segment covering 481–495 (SENDKRSDSKRRGPR) has biased composition (basic and acidic residues).

This sequence belongs to the MDM34 family. As to quaternary structure, component of the ER-mitochondria encounter structure (ERMES) or MDM complex, composed of MMM1, MDM10, MDM12 and MDM34.

The protein localises to the mitochondrion outer membrane. Its function is as follows. Component of the ERMES/MDM complex, which serves as a molecular tether to connect the endoplasmic reticulum (ER) and mitochondria. Components of this complex are involved in the control of mitochondrial shape and protein biogenesis, and function in nonvesicular lipid trafficking between the ER and mitochondria. MDM34 is required for the interaction of the ER-resident membrane protein MMM1 and the outer mitochondrial membrane-resident beta-barrel protein MDM10. The sequence is that of Mitochondrial distribution and morphology protein 34 from Pyricularia oryzae (strain 70-15 / ATCC MYA-4617 / FGSC 8958) (Rice blast fungus).